A 433-amino-acid chain; its full sequence is 4-hydroxy-3-methylbut-2-en-1-yl diphosphate synthase (flavodoxin) (433 aa).

Residues 1–10 (MRYMQDSSMP) are compositionally biased toward polar residues. Residues 1–24 (MRYMQDSSMPCQDASPPDVGAAPR) are disordered. Residues cysteine 320, cysteine 323, cysteine 366, and glutamate 373 each contribute to the [4Fe-4S] cluster site.

The protein belongs to the IspG family. [4Fe-4S] cluster is required as a cofactor.

The catalysed reaction is (2E)-4-hydroxy-3-methylbut-2-enyl diphosphate + oxidized [flavodoxin] + H2O + 2 H(+) = 2-C-methyl-D-erythritol 2,4-cyclic diphosphate + reduced [flavodoxin]. It participates in isoprenoid biosynthesis; isopentenyl diphosphate biosynthesis via DXP pathway; isopentenyl diphosphate from 1-deoxy-D-xylulose 5-phosphate: step 5/6. Its function is as follows. Converts 2C-methyl-D-erythritol 2,4-cyclodiphosphate (ME-2,4cPP) into 1-hydroxy-2-methyl-2-(E)-butenyl 4-diphosphate. This chain is 4-hydroxy-3-methylbut-2-en-1-yl diphosphate synthase (flavodoxin), found in Bordetella bronchiseptica (strain ATCC BAA-588 / NCTC 13252 / RB50) (Alcaligenes bronchisepticus).